A 220-amino-acid polypeptide reads, in one-letter code: 5-hmdU DNA kinase 1 (220 aa).

The protein belongs to the thymidylate kinase family. 5-hmdU DNA kinase subfamily.

The enzyme catalyses 5-hydroxymethyl-dUMP in DNA + ATP = 5-phosphomethyl-dUMP in DNA + ADP + H(+). Phosphorylates 5-hydroxymethyluracil (5hmdU) into 5-phosphomethyl-2'-deoxyuridine (5- PmdU) on DNA as a step in the pathway leading to thymidine hypermodifications in the viral genome. The phosphate is added internally to the DNA polymer. As a final result of the pathway of hypermodification, 5-aminoethoxy-2'-deoxymethyluridine (5-NeOmdU) substitutes for about 40% of the thymidines in the viral DNA. These modifications probably prevent degradation of viral genome by the host restriction-modification antiviral defense system. This chain is 5-hmdU DNA kinase 1, found in Salmonella phage ViI.